A 532-amino-acid polypeptide reads, in one-letter code: Flavin-containing monooxygenase 1 (532 aa).

Residues 1 to 510 lie on the Lumenal side of the membrane; the sequence is MVKRVAIVGA…TRTVQETPST (510 aa). FAD is bound by residues 9–13, Glu32, 40–41, and 61–62; these read GAGVS, LW, and NS. NADP(+) is bound by residues 60-61 and 195-198; these read SN and SGTD. Residues 511–531 form a helical membrane-spanning segment; it reads FETLLKLFSFLALLVAVFFIF. A topological domain (cytoplasmic) is located at residue Leu532.

Belongs to the FMO family. FAD is required as a cofactor. In terms of tissue distribution, expressed in liver, lung and kidney and to a lesser extent in the heart and brain.

The protein localises to the endoplasmic reticulum membrane. The enzyme catalyses hypotaurine + NADPH + O2 + H(+) = taurine + NADP(+) + H2O. It carries out the reaction hypotaurine + NADH + O2 + H(+) = taurine + NAD(+) + H2O. It catalyses the reaction trimethylamine + NADPH + O2 = trimethylamine N-oxide + NADP(+) + H2O. The catalysed reaction is N,N-dimethylaniline + NADPH + O2 + H(+) = N,N-dimethylaniline N-oxide + NADP(+) + H2O. Functionally, broad spectrum monooxygenase that catalyzes the oxygenation of a wide variety of nitrogen- and sulfur-containing compounds including xenobiotics. Catalyzes the S-oxygenation of hypotaurine to produce taurine, an organic osmolyte involved in cell volume regulation as well as a variety of cytoprotective and developmental processes. In vitro, catalyzes the N-oxygenation of trimethylamine (TMA) to produce trimethylamine N-oxide (TMAO) and could therefore participate to the detoxification of this compound that is generated by the action of gut microbiota from dietary precursors such as choline, choline containing compounds, betaine or L-carnitine. The polypeptide is Flavin-containing monooxygenase 1 (Rattus norvegicus (Rat)).